The chain runs to 743 residues: Probable TonB-dependent siderophore receptor PiuA (743 aa).

The signal sequence occupies residues 1-28; that stretch reads MSLIRTRKKIVSSAIASSLSMIATTAMA. The region spanning 61–167 is the TBDR plug domain; that stretch reads PLLDTPKSVS…VGGSINMISK (107 aa). Residues 172 to 743 enclose the TBDR beta-barrel domain; it reads GDFLEGSVAA…SAVLAVNFKY (572 aa). 2 cysteine pairs are disulfide-bonded: cysteine 408-cysteine 416 and cysteine 627-cysteine 632.

It belongs to the TonB-dependent receptor family.

The protein resides in the cell outer membrane. In terms of biological role, probably involved in the initial step of iron uptake by binding iron chelating siderophores, thereby allowing extraction of iron from the environment. May bind the siderophore, ferric enterobactin, with micromolar affinity. The protein is Probable TonB-dependent siderophore receptor PiuA of Acinetobacter baumannii (strain ATCC 19606 / DSM 30007 / JCM 6841 / CCUG 19606 / CIP 70.34 / NBRC 109757 / NCIMB 12457 / NCTC 12156 / 81).